We begin with the raw amino-acid sequence, 643 residues long: Transmembrane 9 superfamily member 4 (643 aa).

Residues 1-23 (MAAAMIWWPRFLLLLCLTCKGST) form the signal peptide. The Extracellular segment spans residues 24–282 (FYVPGVAPIN…TMSDVQIHWF (259 aa)). A helical membrane pass occupies residues 283-303 (SIINSVVVVFFLSGILSMIII). Residues 304–347 (RTLRKDIANYNKEDDIEDTMEESGWKLVHGDVFRPPQYPMILSS) lie on the Cytoplasmic side of the membrane. Position 313 is a phosphotyrosine (Y313). Residues 348–368 (LLGSGIQLFCMILIVIFVAML) traverse the membrane as a helical segment. The Extracellular portion of the chain corresponds to 369–377 (GMLSPSSRG). Residues 378-398 (ALMTTACFLFMFMGVFGGFSA) traverse the membrane as a helical segment. The Cytoplasmic segment spans residues 399–417 (GRLYRTLKGHRWKKGAFCT). Residues 418–438 (ATLYPGVVFGICFVLNCFIWG) form a helical membrane-spanning segment. The Extracellular portion of the chain corresponds to 439-450 (KHSSGAVPFPTM). Residues 451–471 (VALLCMWFGISLPLVYLGYYF) form a helical membrane-spanning segment. Over 472-502 (GFRKQPYDNPVRTNQIPRQIPEQRWYMNRFV) the chain is Cytoplasmic. Residues 503 to 523 (GILMAGILPFGAMFIELFFIF) form a helical membrane-spanning segment. Topologically, residues 524-536 (SAIWENQFYYLFG) are extracellular. A helical transmembrane segment spans residues 537-557 (FLFLVFIILVVSCSQISIVMV). Topologically, residues 558–571 (YFQLCAEDYRWWWR) are cytoplasmic. Residues 572-592 (NFLVSGGSAFYVLVYAIFYFV) form a helical membrane-spanning segment. Residues 593–599 (NKLDIVE) lie on the Extracellular side of the membrane. A helical membrane pass occupies residues 600–620 (FIPSLLYFGYTTLMVLSFWLL). The Cytoplasmic portion of the chain corresponds to 621–643 (TGTIGFYAAYMFVRKIYAAVKID).

The protein belongs to the nonaspanin (TM9SF) (TC 9.A.2) family.

The protein localises to the membrane. It is found in the golgi apparatus. Its subcellular location is the early endosome. Functionally, associates with proteins harboring glycine-rich transmembrane domains and ensures their efficient localization to the cell surface. The chain is Transmembrane 9 superfamily member 4 (Tm9sf4) from Rattus norvegicus (Rat).